The chain runs to 278 residues: Indole-3-glycerol phosphate synthase (278 aa).

Belongs to the TrpC family.

It carries out the reaction 1-(2-carboxyphenylamino)-1-deoxy-D-ribulose 5-phosphate + H(+) = (1S,2R)-1-C-(indol-3-yl)glycerol 3-phosphate + CO2 + H2O. Its pathway is amino-acid biosynthesis; L-tryptophan biosynthesis; L-tryptophan from chorismate: step 4/5. The protein is Indole-3-glycerol phosphate synthase of Pseudomonas aeruginosa (strain UCBPP-PA14).